The sequence spans 115 residues: MPKANNAVASKARRKRVLKKAKGYWGSRGNILTVVKHAVDKGEQYAYRDRRAKKRSFRSLWIIRINAAARLNGTTYSRLMDAMIKKNVEIDRKTMAEIAVRDPEAFTQLVKTIID.

The protein belongs to the bacterial ribosomal protein bL20 family.

Binds directly to 23S ribosomal RNA and is necessary for the in vitro assembly process of the 50S ribosomal subunit. It is not involved in the protein synthesizing functions of that subunit. The chain is Large ribosomal subunit protein bL20 from Chlorobium luteolum (strain DSM 273 / BCRC 81028 / 2530) (Pelodictyon luteolum).